The following is a 284-amino-acid chain: Chaperone protein dnaJ 6 (284 aa).

Disordered regions lie at residues 1–30 (MGRK…ETSL), 196–221 (NKIS…AKDS), and 252–284 (GGDA…SRGK). Residues 3–6 (RKKK) carry the Nuclear localization signal motif. A J domain is found at 29–94 (SLYEVLGVER…EKRAVYDQTG (66 aa)). Residues 209–215 (RKRKKKK) carry the Nuclear localization signal motif. Residues 255-265 (AEAEPTEEEFE) are compositionally biased toward acidic residues. A compositionally biased stretch (basic and acidic residues) spans 266–275 (AAQRRIESKR).

The protein belongs to the DnaJ family. C/III subfamily. Highly expressed in leaves, flowers and siliques, and to lower extent in roots.

It is found in the nucleus. Its function is as follows. Plays a continuous role in plant development probably in the structural organization of compartments. The protein is Chaperone protein dnaJ 6 (ATJ6) of Arabidopsis thaliana (Mouse-ear cress).